A 392-amino-acid polypeptide reads, in one-letter code: S-adenosylmethionine synthase (392 aa).

Mg(2+) is bound at residue E10. H16 contacts ATP. Residue E44 participates in K(+) binding. L-methionine-binding residues include E57 and Q100. ATP-binding positions include 168-170 (DGK), 236-239 (SGRF), D247, 253-254 (RK), A270, K274, and K278. D247 provides a ligand contact to L-methionine. L-methionine is bound at residue K278.

This sequence belongs to the AdoMet synthase family. Homotetramer. Mn(2+) serves as cofactor. Requires Mg(2+) as cofactor. The cofactor is Co(2+). It depends on K(+) as a cofactor.

The protein resides in the cytoplasm. It carries out the reaction L-methionine + ATP + H2O = S-adenosyl-L-methionine + phosphate + diphosphate. It functions in the pathway amino-acid biosynthesis; S-adenosyl-L-methionine biosynthesis; S-adenosyl-L-methionine from L-methionine: step 1/1. Its function is as follows. Catalyzes the formation of S-adenosylmethionine from methionine and ATP. The reaction comprises two steps that are both catalyzed by the same enzyme: formation of S-adenosylmethionine (AdoMet) and triphosphate, and subsequent hydrolysis of the triphosphate. This Phaseolus lunatus (Lima bean) protein is S-adenosylmethionine synthase (SAMS).